Consider the following 282-residue polypeptide: 3-methyl-2-oxobutanoate hydroxymethyltransferase (282 aa).

Residues Asp-63 and Asp-102 each coordinate Mg(2+). 3-methyl-2-oxobutanoate is bound by residues 63 to 64 (DS), Asp-102, and Lys-132. Glu-134 contacts Mg(2+). The active-site Proton acceptor is the Glu-200.

It belongs to the PanB family. In terms of assembly, homodecamer; pentamer of dimers. Requires Mg(2+) as cofactor.

The protein resides in the cytoplasm. It catalyses the reaction 3-methyl-2-oxobutanoate + (6R)-5,10-methylene-5,6,7,8-tetrahydrofolate + H2O = 2-dehydropantoate + (6S)-5,6,7,8-tetrahydrofolate. It functions in the pathway cofactor biosynthesis; (R)-pantothenate biosynthesis; (R)-pantoate from 3-methyl-2-oxobutanoate: step 1/2. Functionally, catalyzes the reversible reaction in which hydroxymethyl group from 5,10-methylenetetrahydrofolate is transferred onto alpha-ketoisovalerate to form ketopantoate. This is 3-methyl-2-oxobutanoate hydroxymethyltransferase from Mycobacterium sp. (strain JLS).